The following is a 558-amino-acid chain: Potassium-transporting ATPase potassium-binding subunit 1 (558 aa).

12 helical membrane passes run 1-21, 66-86, 127-147, 166-186, 245-265, 281-301, 327-347, 354-374, 377-397, 416-436, 482-502, and 531-551; these read MEIILFLTMMVMIAYVFSGYL, FNGFMGVITFVLLIVQQWLFL, MIVMTYLMFTSSASGYAVCIA, IVRFIVRVLLPLSCLISILLM, IWSNFIEMGSMMLLPMSMLFL, ALILFVAMFFIFIAILTLTMW, FGAGLSALFTVITTAFTTGSV, LTPLGGLGPMVLMMLNVVFGG, VGLMNLLIYVLLTLFICSLMV, IVLVFLIHPILILVFSALAFM, ISTGIIMLLSRYIPIILQLMI, and IVFIVLLSGLTFIPVLLLGPI.

It belongs to the KdpA family. The system is composed of three essential subunits: KdpA, KdpB and KdpC.

It is found in the cell membrane. In terms of biological role, part of the high-affinity ATP-driven potassium transport (or Kdp) system, which catalyzes the hydrolysis of ATP coupled with the electrogenic transport of potassium into the cytoplasm. This subunit binds the extracellular potassium ions and delivers the ions to the membrane domain of KdpB through an intramembrane tunnel. This is Potassium-transporting ATPase potassium-binding subunit 1 from Staphylococcus aureus (strain MRSA252).